Consider the following 308-residue polypeptide: Solute carrier family 25 member 47 (308 aa).

Solcar repeat units follow at residues 1-80 (MDFV…CLAH), 93-206 (PTKA…LCEW), and 215-302 (PDVP…VLRL). Transmembrane regions (helical) follow at residues 3–23 (FVAG…LDTV), 49–69 (VWGF…VSSV), 98–116 (ITLS…TSPT), 190–210 (GHSF…LSPA), 217–237 (VPGV…VATP), and 273–293 (VLFK…MVVF).

Belongs to the mitochondrial carrier (TC 2.A.29) family. As to expression, specifically expressed in liver.

Its subcellular location is the mitochondrion inner membrane. It is found in the mitochondrion outer membrane. It catalyses the reaction NAD(+)(in) = NAD(+)(out). It carries out the reaction acetyl-CoA(in) = acetyl-CoA(out). Its function is as follows. Mitochondrial NAD(+) transporter that acts as a 'metabolic gate' in hepatic lipogenesis. Provides NAD(+) substrate to mitochondrial SIRT3 deacetylase and enables its NAD(+)-dependent activities in mitochondrial energy metabolism. This triggers downstream activation of PRKAA1/AMPK-alpha signaling cascade that negatively regulates sterol regulatory element-binding protein (SREBP) transcriptional activities and ATP-consuming lipogenesis to restore cellular energy balance. May transport other mitochondrial metabolites having an aromatic nucleotide and phosphate groups, such as acetyl-CoA. Does not transport amino acids. The transport mechanism remains to be elucidated. The sequence is that of Solute carrier family 25 member 47 from Homo sapiens (Human).